We begin with the raw amino-acid sequence, 241 residues long: B9 domain-containing protein 1 (241 aa).

Residues 1–42 form a disordered region; sequence MSASEGISLPGNEETTPPHEKHKQKAKKAKKKSRSAKESVPN. Residues 20 to 34 show a composition bias toward basic residues; the sequence is EKHKQKAKKAKKKSR. A C2 B9-type domain is found at 53–197; sequence FSLSIVGQIV…TSWLLRREPE (145 aa).

Belongs to the B9D family. In terms of assembly, probable component of the tectonic-like complex (also named MKS complex), composed of B9d1, B9d2, Cc2d2a, Mks1 and tctn. As to expression, expressed in type I sensory neurons (at protein level). Expressed in spermatids and spermatocytes (at protein level).

The protein resides in the cytoplasm. Its subcellular location is the cytoskeleton. The protein localises to the cilium basal body. Probable component of the tectonic-like complex (also named MKS complex), a complex localized at the transition zone of primary cilia. Required for ciliary structure and function. This chain is B9 domain-containing protein 1, found in Drosophila melanogaster (Fruit fly).